Here is a 291-residue protein sequence, read N- to C-terminus: N-acetylmannosamine kinase (291 aa).

Residues 5-12 (AIDIGGTK) and 132-139 (GVGGGVVC) contribute to the ATP site. Residues His156, Cys166, Cys168, and Cys173 each contribute to the Zn(2+) site.

This sequence belongs to the ROK (NagC/XylR) family. NanK subfamily. In terms of assembly, homodimer.

It carries out the reaction an N-acyl-D-mannosamine + ATP = an N-acyl-D-mannosamine 6-phosphate + ADP + H(+). It participates in amino-sugar metabolism; N-acetylneuraminate degradation; D-fructose 6-phosphate from N-acetylneuraminate: step 2/5. In terms of biological role, catalyzes the phosphorylation of N-acetylmannosamine (ManNAc) to ManNAc-6-P. This Salmonella heidelberg (strain SL476) protein is N-acetylmannosamine kinase.